The chain runs to 645 residues: Threonine--tRNA ligase (645 aa).

A TGS domain is found at 1-63 (MEQINIQFPD…ETDGSIGIVT (63 aa)). A catalytic region spans residues 242–540 (DHRKIGKELE…LTEETKGAFP (299 aa)). Residues Cys-336, His-387, and His-517 each coordinate Zn(2+).

The protein belongs to the class-II aminoacyl-tRNA synthetase family. Homodimer. It depends on Zn(2+) as a cofactor.

The protein resides in the cytoplasm. It catalyses the reaction tRNA(Thr) + L-threonine + ATP = L-threonyl-tRNA(Thr) + AMP + diphosphate + H(+). In terms of biological role, catalyzes the attachment of threonine to tRNA(Thr) in a two-step reaction: L-threonine is first activated by ATP to form Thr-AMP and then transferred to the acceptor end of tRNA(Thr). Also edits incorrectly charged L-seryl-tRNA(Thr). The polypeptide is Threonine--tRNA ligase (Staphylococcus aureus (strain Mu3 / ATCC 700698)).